Here is a 195-residue protein sequence, read N- to C-terminus: 5'-deoxynucleotidase SO_2484 (195 aa).

Substrate is bound by residues 16-17 and H31; that span reads RW. One can recognise an HD domain in the interval 28–140; the sequence is VQEHSLQVAM…VKSADTLCAY (113 aa). A divalent metal cation contacts are provided by H31, H66, and D67. Substrate-binding positions include D67, 75 to 78, and D135; that span reads DLPT. D135 provides a ligand contact to a divalent metal cation.

This sequence belongs to the 5DNU family. Homodimer. It depends on a divalent metal cation as a cofactor.

It localises to the cytoplasm. It catalyses the reaction a 2'-deoxyribonucleoside 5'-phosphate + H2O = a 2'-deoxyribonucleoside + phosphate. Catalyzes the strictly specific dephosphorylation of 2'-deoxyribonucleoside 5'-monophosphates. This Shewanella oneidensis (strain ATCC 700550 / JCM 31522 / CIP 106686 / LMG 19005 / NCIMB 14063 / MR-1) protein is 5'-deoxynucleotidase SO_2484.